Consider the following 413-residue polypeptide: Porin PorA (413 aa).

The signal sequence occupies residues 1–22; the sequence is MKKVVSSLLIILGAAMLIFAIA. The segment at 265–288 is disordered; sequence TKSAADSKDDKKKDGDKKDEKSPE.

The protein belongs to the PorA family.

It localises to the secreted. Its subcellular location is the cell wall. Its function is as follows. Forms water-filled channels that favor the permeation of cations. This is Porin PorA from Corynebacterium resistens (strain DSM 45100 / JCM 12819 / GTC 2026 / SICGH 158).